The sequence spans 831 residues: Translation initiation factor IF-2 (831 aa).

Basic and acidic residues predominate over residues 1–11 (MADEIKKENAP). The disordered stretch occupies residues 1 to 236 (MADEIKKENA…GKHAKKASAL (236 aa)). Positions 22–31 (TTVSGTSTTG) are enriched in low complexity. Composition is skewed to basic and acidic residues over residues 49-150 (DLER…RYAD) and 157-166 (DNGKLDDYSD). The segment covering 190-200 (RSKNKVVKAKK) has biased composition (basic residues). Over residues 201-225 (GGRDDENGNKNERQSDRRNQKDVKG) the composition is skewed to basic and acidic residues. A tr-type G domain is found at 330–500 (HRAPVVTIMG…LLQSEVLELT (171 aa)). A G1 region spans residues 339–346 (GHVDHGKT). GTP is bound at residue 339–346 (GHVDHGKT). Positions 364–368 (GITQH) are G2. The interval 386 to 389 (DTPG) is G3. GTP-binding positions include 386–390 (DTPGH) and 440–443 (NKID). The segment at 440–443 (NKID) is G4. A G5 region spans residues 476 to 478 (SAK).

Belongs to the TRAFAC class translation factor GTPase superfamily. Classic translation factor GTPase family. IF-2 subfamily.

Its subcellular location is the cytoplasm. Functionally, one of the essential components for the initiation of protein synthesis. Protects formylmethionyl-tRNA from spontaneous hydrolysis and promotes its binding to the 30S ribosomal subunits. Also involved in the hydrolysis of GTP during the formation of the 70S ribosomal complex. This Histophilus somni (strain 2336) (Haemophilus somnus) protein is Translation initiation factor IF-2.